The following is a 155-amino-acid chain: Large ribosomal subunit protein uL13 (155 aa).

This sequence belongs to the universal ribosomal protein uL13 family. In terms of assembly, part of the 50S ribosomal subunit.

Functionally, this protein is one of the early assembly proteins of the 50S ribosomal subunit, although it is not seen to bind rRNA by itself. It is important during the early stages of 50S assembly. In Rickettsia typhi (strain ATCC VR-144 / Wilmington), this protein is Large ribosomal subunit protein uL13.